A 274-amino-acid polypeptide reads, in one-letter code: Dehydration-responsive element-binding protein 2A (274 aa).

2 stretches are compositionally biased toward basic and acidic residues: residues 1–10 (MERGEGRRGD) and 35–50 (KWWKEQNQKLQEENSS). The tract at residues 1–75 (MERGEGRRGD…KGGPENSNCA (75 aa)) is disordered. The AP2/ERF DNA-binding region spans 75–132 (AYRGVRQRTWGKWVAEIREPNRGRRLWLGSFPTALEAAHAYDEAARAMYGPTARVNFA).

It belongs to the AP2/ERF transcription factor family. ERF subfamily.

The protein resides in the nucleus. Its function is as follows. Transcriptional activator that binds specifically to the DNA sequence 5'-[AG]CCGAC-3' of the cis-acting dehydration-responsive element (DRE). Binding to the C-repeat/DRE element mediates high salinity- and dehydration-inducible transcription. This chain is Dehydration-responsive element-binding protein 2A (DREB2A), found in Oryza sativa subsp. japonica (Rice).